We begin with the raw amino-acid sequence, 424 residues long: D-inositol 3-phosphate glycosyltransferase (424 aa).

His-9 provides a ligand contact to 1D-myo-inositol 3-phosphate. UDP-N-acetyl-alpha-D-glucosamine-binding positions include 15–16 (QP) and Gly-23. Residues 20-25 (DSGGMN), Lys-78, Tyr-110, Thr-134, and Arg-154 contribute to the 1D-myo-inositol 3-phosphate site. 3 residues coordinate UDP-N-acetyl-alpha-D-glucosamine: Arg-231, Lys-236, and Arg-294. Tyr-303, Arg-304, and Ala-306 together coordinate Mg(2+). UDP-N-acetyl-alpha-D-glucosamine-binding residues include Glu-316 and Glu-324. A Mg(2+)-binding site is contributed by Thr-330.

It belongs to the glycosyltransferase group 1 family. MshA subfamily. Homodimer.

It carries out the reaction 1D-myo-inositol 3-phosphate + UDP-N-acetyl-alpha-D-glucosamine = 1D-myo-inositol 2-acetamido-2-deoxy-alpha-D-glucopyranoside 3-phosphate + UDP + H(+). Catalyzes the transfer of a N-acetyl-glucosamine moiety to 1D-myo-inositol 3-phosphate to produce 1D-myo-inositol 2-acetamido-2-deoxy-glucopyranoside 3-phosphate in the mycothiol biosynthesis pathway. This Corynebacterium efficiens (strain DSM 44549 / YS-314 / AJ 12310 / JCM 11189 / NBRC 100395) protein is D-inositol 3-phosphate glycosyltransferase.